A 659-amino-acid polypeptide reads, in one-letter code: Fructose-1,6-bisphosphatase class 3 (659 aa).

Belongs to the FBPase class 3 family. Mn(2+) serves as cofactor.

The catalysed reaction is beta-D-fructose 1,6-bisphosphate + H2O = beta-D-fructose 6-phosphate + phosphate. It functions in the pathway carbohydrate biosynthesis; gluconeogenesis. This chain is Fructose-1,6-bisphosphatase class 3, found in Clostridium botulinum (strain Alaska E43 / Type E3).